A 750-amino-acid chain; its full sequence is 1,4-alpha-glucan branching enzyme GlgB (750 aa).

The active-site Nucleophile is the Asp-425. The active-site Proton donor is Glu-478.

It belongs to the glycosyl hydrolase 13 family. GlgB subfamily. Monomer.

The enzyme catalyses Transfers a segment of a (1-&gt;4)-alpha-D-glucan chain to a primary hydroxy group in a similar glucan chain.. It functions in the pathway glycan biosynthesis; glycogen biosynthesis. Catalyzes the formation of the alpha-1,6-glucosidic linkages in glycogen by scission of a 1,4-alpha-linked oligosaccharide from growing alpha-1,4-glucan chains and the subsequent attachment of the oligosaccharide to the alpha-1,6 position. This chain is 1,4-alpha-glucan branching enzyme GlgB, found in Cupriavidus pinatubonensis (strain JMP 134 / LMG 1197) (Cupriavidus necator (strain JMP 134)).